The chain runs to 325 residues: MKPILLQGHERSITQIKYNREGDLLFTVAKDPIVNVWYSVNGERLGTYMGHTGAVWCVDADWDTKHVLTGSADNSCRLWDCETGKQLALLKTNSAVRTCGFDFGGNIIMFSTDKQMGYQCFVSFFDLRDPSQIDSNEPYMKIPCNDSKITSAVWGPLGECIIAGHESGELNQYSAKSGEVLVNVKEHSRQINDIQLSRDMTMFVTASKDNTAKLFDSTSLEHQKTFRTERPVNSAALSPNYDHVVLGGGQEAMDVTTTSTRIGKFEARFFHLAFEEEFGRVKGHFGPINSVAFHPDGKSYSSGGEDGYVRIHYFDPQYFEFEFEA.

4 WD repeats span residues 8 to 47 (GHER…RLGT), 50 to 91 (GHTG…ALLK), 144 to 183 (CNDS…VLVN), and 186 to 225 (EHSR…HQKT). K264 is subject to N6-acetyllysine. A Glycyl lysine isopeptide (Lys-Gly) (interchain with G-Cter in ubiquitin) cross-link involves residue K282. Residues 283 to 324 (GHFGPINSVAFHPDGKSYSSGGEDGYVRIHYFDPQYFEFEFE) form a WD 5 repeat. Residue Y308 is modified to Phosphotyrosine.

The protein belongs to the eIF-3 subunit I family. As to quaternary structure, component of the eukaryotic translation initiation factor 3 (eIF-3) complex, which is composed of 13 subunits: EIF3A, EIF3B, EIF3C, EIF3D, EIF3E, EIF3F, EIF3G, EIF3H, EIF3I, EIF3J, EIF3K, EIF3L and EIF3M. The eIF-3 complex appears to include 3 stable modules: module A is composed of EIF3A, EIF3B, EIF3G and EIF3I; module B is composed of EIF3F, EIF3H, and EIF3M; and module C is composed of EIF3C, EIF3D, EIF3E, EIF3K and EIF3L. EIF3C of module C binds EIF3B of module A and EIF3H of module B, thereby linking the three modules. EIF3J is a labile subunit that binds to the eIF-3 complex via EIF3B. The eIF-3 complex interacts with RPS6KB1 under conditions of nutrient depletion. Mitogenic stimulation leads to binding and activation of a complex composed of MTOR and RPTOR, leading to phosphorylation and release of RPS6KB1 and binding of EIF4B to eIF-3. In terms of processing, phosphorylated by TGF-beta type II receptor.

The protein resides in the cytoplasm. Component of the eukaryotic translation initiation factor 3 (eIF-3) complex, which is required for several steps in the initiation of protein synthesis. The eIF-3 complex associates with the 40S ribosome and facilitates the recruitment of eIF-1, eIF-1A, eIF-2:GTP:methionyl-tRNAi and eIF-5 to form the 43S pre-initiation complex (43S PIC). The eIF-3 complex stimulates mRNA recruitment to the 43S PIC and scanning of the mRNA for AUG recognition. The eIF-3 complex is also required for disassembly and recycling of post-termination ribosomal complexes and subsequently prevents premature joining of the 40S and 60S ribosomal subunits prior to initiation. The eIF-3 complex specifically targets and initiates translation of a subset of mRNAs involved in cell proliferation, including cell cycling, differentiation and apoptosis, and uses different modes of RNA stem-loop binding to exert either translational activation or repression. The sequence is that of Eukaryotic translation initiation factor 3 subunit I (Eif3i) from Rattus norvegicus (Rat).